The following is a 205-amino-acid chain: Holliday junction branch migration complex subunit RuvA (205 aa).

A domain I region spans residues 1–64; it reads MIGRLRGIIL…EDAQLLYGFN (64 aa). The interval 65–143 is domain II; that stretch reads DKQERALFRE…GLNGDLFNNT (79 aa). The tract at residues 144 to 156 is flexible linker; it reads GDIQLPASNSSQI. Residues 157-205 are domain III; the sequence is SDADIEAEAASALVALGYKPQEASRLVSKIAKPGADCETLIRDALRAAL.

It belongs to the RuvA family. Homotetramer. Forms an RuvA(8)-RuvB(12)-Holliday junction (HJ) complex. HJ DNA is sandwiched between 2 RuvA tetramers; dsDNA enters through RuvA and exits via RuvB. An RuvB hexamer assembles on each DNA strand where it exits the tetramer. Each RuvB hexamer is contacted by two RuvA subunits (via domain III) on 2 adjacent RuvB subunits; this complex drives branch migration. In the full resolvosome a probable DNA-RuvA(4)-RuvB(12)-RuvC(2) complex forms which resolves the HJ.

The protein localises to the cytoplasm. Functionally, the RuvA-RuvB-RuvC complex processes Holliday junction (HJ) DNA during genetic recombination and DNA repair, while the RuvA-RuvB complex plays an important role in the rescue of blocked DNA replication forks via replication fork reversal (RFR). RuvA specifically binds to HJ cruciform DNA, conferring on it an open structure. The RuvB hexamer acts as an ATP-dependent pump, pulling dsDNA into and through the RuvAB complex. HJ branch migration allows RuvC to scan DNA until it finds its consensus sequence, where it cleaves and resolves the cruciform DNA. The protein is Holliday junction branch migration complex subunit RuvA of Yersinia enterocolitica serotype O:8 / biotype 1B (strain NCTC 13174 / 8081).